We begin with the raw amino-acid sequence, 518 residues long: Putative succinate-semialdehyde dehydrogenase [NADP(+)] 2 (518 aa).

NADP(+) is bound by residues 157–158 (WN), 181–184 (KPDS), and 232–233 (GS). Glu-254 serves as the catalytic Proton acceptor. Leu-255 contributes to the NADP(+) binding site. The active-site Nucleophile is the Cys-288. Glu-386 provides a ligand contact to NADP(+).

Belongs to the aldehyde dehydrogenase family.

The enzyme catalyses succinate semialdehyde + NADP(+) + H2O = succinate + NADPH + 2 H(+). Functionally, catalyzes the NADP(+)-dependent oxidation of succinate semialdehyde to succinate. Although it has succinate semialdehyde dehydrogenase activity, is likely to act physiologically on a different aldehyde(s). This chain is Putative succinate-semialdehyde dehydrogenase [NADP(+)] 2 (gabD2), found in Mycobacterium bovis (strain ATCC BAA-935 / AF2122/97).